A 634-amino-acid chain; its full sequence is 1-deoxy-D-xylulose-5-phosphate synthase (634 aa).

Thiamine diphosphate contacts are provided by residues histidine 72 and 113–115 (GHS). Aspartate 144 contributes to the Mg(2+) binding site. Thiamine diphosphate contacts are provided by residues 145–146 (GA), asparagine 173, tyrosine 284, and glutamate 367. Asparagine 173 is a Mg(2+) binding site.

It belongs to the transketolase family. DXPS subfamily. As to quaternary structure, homodimer. It depends on Mg(2+) as a cofactor. The cofactor is thiamine diphosphate.

It carries out the reaction D-glyceraldehyde 3-phosphate + pyruvate + H(+) = 1-deoxy-D-xylulose 5-phosphate + CO2. The protein operates within metabolic intermediate biosynthesis; 1-deoxy-D-xylulose 5-phosphate biosynthesis; 1-deoxy-D-xylulose 5-phosphate from D-glyceraldehyde 3-phosphate and pyruvate: step 1/1. Catalyzes the acyloin condensation reaction between C atoms 2 and 3 of pyruvate and glyceraldehyde 3-phosphate to yield 1-deoxy-D-xylulose-5-phosphate (DXP). This is 1-deoxy-D-xylulose-5-phosphate synthase from Listeria welshimeri serovar 6b (strain ATCC 35897 / DSM 20650 / CCUG 15529 / CIP 8149 / NCTC 11857 / SLCC 5334 / V8).